A 388-amino-acid chain; its full sequence is Formate-dependent phosphoribosylglycinamide formyltransferase (388 aa).

Residues 20–21 and E80 each bind N(1)-(5-phospho-beta-D-ribosyl)glycinamide; that span reads EL. ATP-binding positions include R112, K153, 158-163, 193-196, and E201; these read SSGKGQ and EEFI. Residues 117–306 enclose the ATP-grasp domain; the sequence is RLAFEKLGLR…EFEIHARAIL (190 aa). E265 and E277 together coordinate Mg(2+). Residues D284, K352, and 359-360 each bind N(1)-(5-phospho-beta-D-ribosyl)glycinamide; that span reads RR.

This sequence belongs to the PurK/PurT family. In terms of assembly, homodimer.

The enzyme catalyses N(1)-(5-phospho-beta-D-ribosyl)glycinamide + formate + ATP = N(2)-formyl-N(1)-(5-phospho-beta-D-ribosyl)glycinamide + ADP + phosphate + H(+). The protein operates within purine metabolism; IMP biosynthesis via de novo pathway; N(2)-formyl-N(1)-(5-phospho-D-ribosyl)glycinamide from N(1)-(5-phospho-D-ribosyl)glycinamide (formate route): step 1/1. Functionally, involved in the de novo purine biosynthesis. Catalyzes the transfer of formate to 5-phospho-ribosyl-glycinamide (GAR), producing 5-phospho-ribosyl-N-formylglycinamide (FGAR). Formate is provided by PurU via hydrolysis of 10-formyl-tetrahydrofolate. The sequence is that of Formate-dependent phosphoribosylglycinamide formyltransferase from Methanococcus maripaludis (strain DSM 14266 / JCM 13030 / NBRC 101832 / S2 / LL).